A 920-amino-acid polypeptide reads, in one-letter code: Dynamin-2B (920 aa).

Met1 carries the post-translational modification N-acetylmethionine. In terms of domain architecture, Dynamin-type G spans 35 to 303 (PATSLNVVAL…IRSRMKLRLP (269 aa)). The interval 45–52 (GNVGAGKS) is G1 motif. 45-53 (GNVGAGKSA) lines the GTP pocket. Positions 71-73 (ATR) are G2 motif. Residues 143–146 (DLPG) are G3 motif. Positions 204–207 (SKID) are G4 motif. GTP is bound at residue 204 to 210 (SKIDQAA). Positions 238 to 241 (ALIG) are G5 motif. 246–249 (IASA) serves as a coordination point for GTP. Residues 507–522 (RREEELKGRSSKKGQD) show a composition bias toward basic and acidic residues. Disordered stretches follow at residues 507-577 (RREE…TAGP) and 632-657 (IEEISDDEGEKSKSSKDKKSNGPDSK). Polar residues predominate over residues 523–545 (AEQSLLNRATSPQPDGPSSTGGS). 2 stretches are compositionally biased toward basic and acidic residues: residues 548 to 567 (SLRDKLMPQDKDKDKEKETP) and 641 to 652 (EKSKSSKDKKSN). The PH domain maps to 579-703 (GEITAGYLMK…WINKLQKVIQ (125 aa)). Positions 737-830 (LRWMSQEVRG…QLSIHDNRAA (94 aa)) constitute a GED domain. The segment at 747 to 761 (YVEAVLNSLAANVPK) is important for homodimerization. Positions 788–812 (NERIESLIQEDQNVKRRRDRYQKQS) form a coiled coil. Residues 828 to 920 (RAAAASSWSD…PPQSGSSYRY (93 aa)) form a disordered region. Residues 833–849 (SSWSDNSGTESSPRTNG) show a composition bias toward polar residues.

It belongs to the TRAFAC class dynamin-like GTPase superfamily. Dynamin/Fzo/YdjA family. As to quaternary structure, interacts with DRP1A at the plasma membrane and in forming clathrin-coated vesicles (CCV). In terms of tissue distribution, ubiquitous. Preferentially expressed in siliques.

It localises to the cytoplasm. Its subcellular location is the cytoskeleton. It is found in the cytoplasmic vesicle. The protein resides in the clathrin-coated vesicle. The protein localises to the cell membrane. The enzyme catalyses GTP + H2O = GDP + phosphate + H(+). Putative microtubule-associated force-producing protein, able to bind and hydrolyze GTP. Collaboratively with DRP1A, participates in clathrin-coated vesicle formation during endocytosis. With DRP1A and PIP5K3, required for the precise coordination of polar ARAC3/ROP6 and ARAC4/ROP2 placement and subsequent root hair positioning during planar polarity formation in root hair-forming cells. In Arabidopsis thaliana (Mouse-ear cress), this protein is Dynamin-2B.